The chain runs to 234 residues: Nitroreductase NfnB (234 aa).

25 to 29 (RRAVR) contributes to the FMN binding site. Residues Ser55, Arg105, Tyr113, and Ile118 each contribute to the NADP(+) site. FMN-binding positions include Tyr137, 181-182 (AL), and Arg223.

This sequence belongs to the nitroreductase family. Homodimer. FMN serves as cofactor.

Confers resistance to antitubercular drugs benzothiazinone (BTZ) and dinitrobenzamide (DNB). Inactivates BTZ and DNB by reducing an essential nitro group of these compounds to amino group or to hydroxyl amine, respectively, using NADH or NADPH as source of reducing equivalents; two electrons are transferred. Able to reduce the nitro group of bicyclic nitroimidazole PA-824, but not of quinone menadione, nitrofurazone, methyl-4-nitrobenzoate, 4-nitrobenzene methyl sulfonate or 4-nitroacetophenone. This is Nitroreductase NfnB from Mycolicibacterium smegmatis (strain ATCC 700084 / mc(2)155) (Mycobacterium smegmatis).